A 393-amino-acid polypeptide reads, in one-letter code: Methylthioribose kinase (393 aa).

ATP is bound by residues asparagine 38, lysine 53, and glutamate 107–leucine 109. Substrate is bound at residue aspartate 225. Aspartate 242–glutamate 244 contributes to the ATP binding site. Arginine 332 contacts substrate.

It belongs to the methylthioribose kinase family. In terms of assembly, homodimer.

The catalysed reaction is 5-(methylsulfanyl)-D-ribose + ATP = 5-(methylsulfanyl)-alpha-D-ribose 1-phosphate + ADP + H(+). It participates in amino-acid biosynthesis; L-methionine biosynthesis via salvage pathway; S-methyl-5-thio-alpha-D-ribose 1-phosphate from S-methyl-5'-thioadenosine (hydrolase route): step 2/2. Its function is as follows. Catalyzes the phosphorylation of methylthioribose into methylthioribose-1-phosphate. The sequence is that of Methylthioribose kinase from Bacillus anthracis (strain A0248).